Reading from the N-terminus, the 100-residue chain is uncharacterized protein (100 aa).

Transmembrane regions (helical) follow at residues 7–28 (TLIG…LLSL), 38–60 (AQLS…ILII), and 65–87 (LSAL…ANGV).

The protein localises to the cell membrane. This is an uncharacterized protein from Archaeoglobus fulgidus (strain ATCC 49558 / DSM 4304 / JCM 9628 / NBRC 100126 / VC-16).